Reading from the N-terminus, the 461-residue chain is Bifunctional protein GlmU (461 aa).

The pyrophosphorylase stretch occupies residues 1-229 (MEKYVVVLAA…FSESLGVNDR (229 aa)). Residues 8–11 (LAAG), Lys-22, Gln-72, and 77–78 (GT) contribute to the UDP-N-acetyl-alpha-D-glucosamine site. Position 102 (Asp-102) interacts with Mg(2+). 4 residues coordinate UDP-N-acetyl-alpha-D-glucosamine: Gly-139, Glu-154, Asn-169, and Asn-227. Asn-227 is a Mg(2+) binding site. The tract at residues 230–250 (IALAEATRIMQRRINEGHMRD) is linker. The tract at residues 251 to 461 (GVTFIDPATA…LPLSEDEEWK (211 aa)) is N-acetyltransferase. Arg-332 and Lys-350 together coordinate UDP-N-acetyl-alpha-D-glucosamine. The active-site Proton acceptor is His-362. Residues Tyr-365 and Asn-376 each coordinate UDP-N-acetyl-alpha-D-glucosamine. Acetyl-CoA is bound by residues Ala-422 and Arg-439.

In the N-terminal section; belongs to the N-acetylglucosamine-1-phosphate uridyltransferase family. This sequence in the C-terminal section; belongs to the transferase hexapeptide repeat family. As to quaternary structure, homotrimer. The cofactor is Mg(2+).

It is found in the cytoplasm. It carries out the reaction alpha-D-glucosamine 1-phosphate + acetyl-CoA = N-acetyl-alpha-D-glucosamine 1-phosphate + CoA + H(+). It catalyses the reaction N-acetyl-alpha-D-glucosamine 1-phosphate + UTP + H(+) = UDP-N-acetyl-alpha-D-glucosamine + diphosphate. It functions in the pathway nucleotide-sugar biosynthesis; UDP-N-acetyl-alpha-D-glucosamine biosynthesis; N-acetyl-alpha-D-glucosamine 1-phosphate from alpha-D-glucosamine 6-phosphate (route II): step 2/2. It participates in nucleotide-sugar biosynthesis; UDP-N-acetyl-alpha-D-glucosamine biosynthesis; UDP-N-acetyl-alpha-D-glucosamine from N-acetyl-alpha-D-glucosamine 1-phosphate: step 1/1. Its pathway is bacterial outer membrane biogenesis; LPS lipid A biosynthesis. Functionally, catalyzes the last two sequential reactions in the de novo biosynthetic pathway for UDP-N-acetylglucosamine (UDP-GlcNAc). The C-terminal domain catalyzes the transfer of acetyl group from acetyl coenzyme A to glucosamine-1-phosphate (GlcN-1-P) to produce N-acetylglucosamine-1-phosphate (GlcNAc-1-P), which is converted into UDP-GlcNAc by the transfer of uridine 5-monophosphate (from uridine 5-triphosphate), a reaction catalyzed by the N-terminal domain. This chain is Bifunctional protein GlmU, found in Lactobacillus delbrueckii subsp. bulgaricus (strain ATCC 11842 / DSM 20081 / BCRC 10696 / JCM 1002 / NBRC 13953 / NCIMB 11778 / NCTC 12712 / WDCM 00102 / Lb 14).